Here is an 843-residue protein sequence, read N- to C-terminus: Glycogen phosphorylase, brain form (843 aa).

Ala2 is subject to N-acetylalanine. Residue Ser15 is modified to Phosphoserine; by PHK; in form phosphorylase A. The AMP site is built by Asp43, Tyr197, and Arg310. Position 197 is a phosphotyrosine (Tyr197). At Tyr473 the chain carries Phosphotyrosine. Ser524 bears the Phosphoserine mark. Lys569 provides a ligand contact to pyridoxal 5'-phosphate. A pyridoxal 5'-phosphate region spans residues 677–678; it reads TG. Lys681 is modified (N6-(pyridoxal phosphate)lysine).

Belongs to the glycogen phosphorylase family. As to quaternary structure, homodimer. Dimers associate into a tetramer to form the enzymatically active phosphorylase A. The cofactor is pyridoxal 5'-phosphate. In terms of processing, phosphorylation of Ser-15 converts phosphorylase B (unphosphorylated) to phosphorylase A.

The catalysed reaction is [(1-&gt;4)-alpha-D-glucosyl](n) + phosphate = [(1-&gt;4)-alpha-D-glucosyl](n-1) + alpha-D-glucose 1-phosphate. Activity of phosphorylase is controlled both by allosteric means (through the non-covalent binding of metabolites) and by covalent modification. Thus AMP allosterically activates, whereas ATP, ADP, and glucose-6-phosphate allosterically inhibit, phosphorylase B. Its function is as follows. Glycogen phosphorylase that regulates glycogen mobilization. Phosphorylase is an important allosteric enzyme in carbohydrate metabolism. Enzymes from different sources differ in their regulatory mechanisms and in their natural substrates. However, all known phosphorylases share catalytic and structural properties. This chain is Glycogen phosphorylase, brain form (Pygb), found in Mus musculus (Mouse).